The sequence spans 319 residues: Pre T-cell antigen receptor alpha (319 aa).

An N-terminal signal peptide occupies residues 1–16; it reads MAESWLLLLLALGCPA. The Extracellular segment spans residues 17–160; the sequence is LPTEVTTLLR…LRGTRALVLR (144 aa). Residues cysteine 58 and cysteine 118 are joined by a disulfide bond. N-linked (GlcNAc...) asparagine glycosylation occurs at asparagine 78. A helical transmembrane segment spans residues 161–181; it reads LGALRLLLFKLLLLDVLLTCG. Residues 182–319 lie on the Cytoplasmic side of the membrane; it reads RLHAPPAARG…PPADPSFPGG (138 aa). Low complexity predominate over residues 189–207; the sequence is ARGDPAGASGPGAPSLPAP. A disordered region spans residues 189-293; that stretch reads ARGDPAGASG…VLRAWSSGPS (105 aa). Residues 260-271 are compositionally biased toward basic residues; sequence RRRRVHTRRPRR.

As to quaternary structure, heterodimer with TCRB; disulfide linked. This heterodimer assembles with CD3 proteins into a signaling-competent pre-T-cell receptor complex. Interacts with RHBDD1.

It localises to the membrane. Its subcellular location is the cell membrane. Functionally, component of the pre-T-cell receptor complex (composed of PTCRA, TCRB and the CD3 complex) that has a crucial role in early T-cell development, particularly alpha-beta T cell differentiation. The protein is Pre T-cell antigen receptor alpha (PTCRA) of Bos taurus (Bovine).